The sequence spans 410 residues: MVLSQRQRDELNRAIADYLRSNGYEEAYSVFKKEAELDMNEELDKKYAGLLEKKWTSVIRLQKKVMELESKLNEAKEEFTSGGPLGQKRDPKEWIPRPPEKYALSGHRSPVTRVIFHPVFSVMVSASEDATIKVWDYETGDFERTLKGHTDSVQDISFDHSGKLLTSCSADMTIKLWDFQGFECIRTMHGHDHNVSSVAIMPNGDHLVSASRDKTIKMWEVQTGYCVKTFTGHREWVRMVRPNQDGTLIASCSNDQTVRVWVVATKECKAELREHEHVVECISWAPESSYSSISEATGSETKKSGKPGPFLLSGSRDKTIKMWDVSTGMCLMTLVGHDNWVRGVLFHSGGKFILSCADDKTLRVWDYKNKRCMKTLNAHEHFVTSLDFHKTAPYVVTGSVDQTVKVWECR.

A required for self-association and interaction with PAFAH1B2 and PAFAH1B3 region spans residues 1–38 (MVLSQRQRDELNRAIADYLRSNGYEEAYSVFKKEAELD). The interval 1-66 (MVLSQRQRDE…SVIRLQKKVM (66 aa)) is interaction with NDE1. The interval 1 to 102 (MVLSQRQRDE…EWIPRPPEKY (102 aa)) is interaction with NDEL1. In terms of domain architecture, LisH spans 7-39 (QRDELNRAIADYLRSNGYEEAYSVFKKEAELDM). At lysine 53 the chain carries N6-acetyllysine. Residues 56–82 (TSVIRLQKKVMELESKLNEAKEEFTSG) are a coiled coil. An interaction with dynein and dynactin region spans residues 83–410 (GPLGQKRDPK…DQTVKVWECR (328 aa)). 7 WD repeats span residues 106 to 147 (GHRS…RTLK), 148 to 187 (GHTD…CIRT), 190 to 229 (GHDH…CVKT), 232 to 271 (GHRE…CKAE), 274 to 333 (EHEH…CLMT), 336 to 377 (GHDN…KTLN), and 378 to 410 (AHEH…WECR). At serine 109 the chain carries Phosphoserine. The interval 367 to 409 (YKNKRCMKTLNAHEHFVTSLDFHKTAPYVVTGSVDQTVKVWEC) is interaction with DCX. An interaction with NDEL1 region spans residues 388–410 (FHKTAPYVVTGSVDQTVKVWECR).

This sequence belongs to the WD repeat LIS1/nudF family. Can self-associate. Component of the cytosolic PAF-AH (I) heterotetrameric enzyme, which is composed of PAFAH1B1 (beta), PAFAH1B2 (alpha2) and PAFAH1B3 (alpha1) subunits. The catalytic activity of the enzyme resides in the alpha1 (PAFAH1B3) and alpha2 (PAFAH1B2) subunits, whereas the beta subunit (PAFAH1B1) has regulatory activity. Trimer formation is not essential for the catalytic activity. Interacts with the catalytic dimer of PAF-AH (I) heterotetrameric enzyme: interacts with PAFAH1B2 homodimer (alpha2/alpha2 homodimer), PAFAH1B3 homodimer (alpha1/alpha1 homodimer) and PAFAH1B2-PAFAH1B3 heterodimer (alpha2/alpha1 heterodimer). Interacts with DCX, dynein, dynactin, IQGAP1, KATNB1, NDE1, NDEL1, NUDC and RSN. Interacts with DISC1, and this interaction is enhanced by NDEL1. Interacts with DAB1 when DAB1 is phosphorylated in response to RELN/reelin signaling. Interacts with INTS13. Interacts with DCDC1.

The protein resides in the cytoplasm. It localises to the cytoskeleton. The protein localises to the microtubule organizing center. Its subcellular location is the centrosome. It is found in the spindle. The protein resides in the nucleus membrane. Its function is as follows. Regulatory subunit (beta subunit) of the cytosolic type I platelet-activating factor (PAF) acetylhydrolase (PAF-AH (I)), an enzyme that catalyzes the hydrolyze of the acetyl group at the sn-2 position of PAF and its analogs and participates in PAF inactivation. Regulates the PAF-AH (I) activity in a catalytic dimer composition-dependent manner. Positively regulates the activity of the minus-end directed microtubule motor protein dynein. May enhance dynein-mediated microtubule sliding by targeting dynein to the microtubule plus end. Required for several dynein- and microtubule-dependent processes such as the maintenance of Golgi integrity, the peripheral transport of microtubule fragments and the coupling of the nucleus and centrosome. Required during brain development for the proliferation of neuronal precursors and the migration of newly formed neurons from the ventricular/subventricular zone toward the cortical plate. Neuronal migration involves a process called nucleokinesis, whereby migrating cells extend an anterior process into which the nucleus subsequently translocates. During nucleokinesis dynein at the nuclear surface may translocate the nucleus towards the centrosome by exerting force on centrosomal microtubules. Also required for proper activation of Rho GTPases and actin polymerization at the leading edge of locomoting cerebellar neurons and postmigratory hippocampal neurons in response to calcium influx triggered via NMDA receptors. May also play a role in other forms of cell locomotion including the migration of fibroblasts during wound healing. Required for dynein recruitment to microtubule plus ends and BICD2-bound cargos. May modulate the Reelin pathway through interaction of the PAF-AH (I) catalytic dimer with VLDLR. This is Platelet-activating factor acetylhydrolase IB subunit alpha from Macaca fascicularis (Crab-eating macaque).